The sequence spans 361 residues: Probable dual-specificity RNA methyltransferase RlmN (361 aa).

Glu91 functions as the Proton acceptor in the catalytic mechanism. The Radical SAM core domain maps to 97–329; sequence QHYGLSVCVT…KKKGGNCVVR (233 aa). Cys104 and Cys340 form a disulfide bridge. 3 residues coordinate [4Fe-4S] cluster: Cys111, Cys115, and Cys118. Residues 163 to 164, Ser195, 218 to 220, and Asn296 contribute to the S-adenosyl-L-methionine site; these read GE and SLH. Cys340 (S-methylcysteine intermediate) is an active-site residue.

It belongs to the radical SAM superfamily. RlmN family. [4Fe-4S] cluster serves as cofactor.

The protein resides in the cytoplasm. It carries out the reaction adenosine(2503) in 23S rRNA + 2 reduced [2Fe-2S]-[ferredoxin] + 2 S-adenosyl-L-methionine = 2-methyladenosine(2503) in 23S rRNA + 5'-deoxyadenosine + L-methionine + 2 oxidized [2Fe-2S]-[ferredoxin] + S-adenosyl-L-homocysteine. The catalysed reaction is adenosine(37) in tRNA + 2 reduced [2Fe-2S]-[ferredoxin] + 2 S-adenosyl-L-methionine = 2-methyladenosine(37) in tRNA + 5'-deoxyadenosine + L-methionine + 2 oxidized [2Fe-2S]-[ferredoxin] + S-adenosyl-L-homocysteine. Functionally, specifically methylates position 2 of adenine 2503 in 23S rRNA and position 2 of adenine 37 in tRNAs. The chain is Probable dual-specificity RNA methyltransferase RlmN from Streptococcus pneumoniae (strain Hungary19A-6).